Here is a 369-residue protein sequence, read N- to C-terminus: Methylthioribose-1-phosphate isomerase (369 aa).

Substrate contacts are provided by residues 54–56, arginine 95, and glutamine 208; that span reads RGA. The active-site Proton donor is aspartate 249. Substrate is bound at residue 259–260; that stretch reads NK.

The protein belongs to the eIF-2B alpha/beta/delta subunits family. MtnA subfamily.

The catalysed reaction is 5-(methylsulfanyl)-alpha-D-ribose 1-phosphate = 5-(methylsulfanyl)-D-ribulose 1-phosphate. It participates in amino-acid biosynthesis; L-methionine biosynthesis via salvage pathway; L-methionine from S-methyl-5-thio-alpha-D-ribose 1-phosphate: step 1/6. Its function is as follows. Catalyzes the interconversion of methylthioribose-1-phosphate (MTR-1-P) into methylthioribulose-1-phosphate (MTRu-1-P). The chain is Methylthioribose-1-phosphate isomerase from Desulfatibacillum aliphaticivorans.